A 90-amino-acid chain; its full sequence is Acylphosphatase (90 aa).

The 87-residue stretch at 4 to 90 (RWRFLIEGSV…TGNDWFDVRT (87 aa)) folds into the Acylphosphatase-like domain. Catalysis depends on residues Arg19 and Asn37.

Belongs to the acylphosphatase family.

The enzyme catalyses an acyl phosphate + H2O = a carboxylate + phosphate + H(+). The protein is Acylphosphatase (acyP) of Synechococcus sp. (strain CC9311).